Consider the following 484-residue polypeptide: Gasdermin-D (484 aa).

A Phosphotyrosine modification is found at Tyr-37. Cys-56 is subject to S-(2-succinyl)cysteine. The next 2 membrane-spanning stretches (beta stranded) occupy residues 91 to 97 (QGSVELA) and 103 to 108 (KIAGGA). Tyr-158 carries the phosphotyrosine modification. Beta stranded transmembrane passes span 180 to 186 (GSGRFSL) and 191 to 197 (CLQGEGQ). Position 185 is a phosphoserine (Ser-185). S-(2-succinyl)cysteine occurs at positions 191 and 268. A lipid anchor (S-palmitoyl cysteine) is attached at Cys-191. The tract at residues 277-296 (VPAEGAFTEDFQGLRAEVET) is linker helix loop. At Cys-309 the chain carries S-(2-succinyl)cysteine. Ser-338 carries an O-linked (GlcNAc) serine glycan. Cys-467 carries the post-translational modification S-(2-succinyl)cysteine.

Belongs to the gasdermin family. Homooligomer; homooligomeric ring-shaped pore complex containing 27-28 subunits when inserted in the membrane. Homooligomerization is promoted by the mTORC1 complex in macrophages. In response to a canonical inflammasome stimulus, such as nigericin, recruited to NLRP3 inflammasone with similar kinetics to that of uncleaved CASP1 precursor. Although this recruitment is also observed in the absence of PYCARD, it is more efficient in its presence. Cleavage at Asp-275 by CASP1 (mature and uncleaved precursor forms), CASP4, CASP5 or CASP8 relieves autoinhibition and is sufficient to initiate pyroptosis. Cleavage by CASP1 and CASP4 is not strictly dependent on the consensus cleavage site on GSDMD but depends on an exosite interface on CASP1 that recognizes and binds the Gasdermin-D, C-terminal (GSDMD-CT) part. Cleavage by CASP8 takes place following inactivation of MAP3K7/TAK1 by Yersinia toxin YopJ. Cleavage at Asp-87 by CASP3 or CASP7 inactivates the ability to mediate pyroptosis, but generates the Gasdermin-D, p13 chain, which translocates to the nucleus and acts as a transcription regulator. Cleavage by papain allergen generates the Gasdermin-D, p40 chain. In terms of processing, palmitoylated at Cys-191 by ZDHHC5 and ZDHHC9 in response to microbial infection and danger signals. Palmitoylation takes place before cleavage by caspases (CASP1, CASP4, CASP5 or CASP8) and is required for membrane translocation and pore formation. Depalmitoylated by LYPLA2. Post-translationally, succination of Cys-191 by the Krebs cycle intermediate fumarate, which leads to S-(2-succinyl)cysteine residues, inhibits processing by caspases, and ability to initiate pyroptosis. Succination modification is catalyzed by a non-enzymatic reaction caused by an accumulation of fumarate. Glycosylated: O-GlcNAcylation by OGT leads to reduced cleavage by CASP4 and decreased LPS-induced endothelial cell pyroptosis. In terms of processing, (Microbial infection) Cleaved and inactivated by Protease 3C from Human enterovirus 71 (EV71), preventing GSDMD-mediated pyroptosis. Post-translationally, (Microbial infection) Cleaved and inactivated by the 3C-like proteinase nsp5 from human coronavirus SARS-CoV-2, preventing GSDMD-mediated pyroptosis. (Microbial infection) Ubiquitinated by S.flexneri IpaH7.8, leading to its degradation by the proteasome. In terms of tissue distribution, expressed in the suprabasal cells of esophagus, as well as in the isthmus/neck, pit, and gland of the stomach, suggesting preferential expression in differentiating cells.

It is found in the cytoplasm. The protein resides in the cytosol. Its subcellular location is the inflammasome. It localises to the cell membrane. The protein localises to the secreted. It is found in the mitochondrion membrane. The protein resides in the nucleus. The full-length protein before cleavage is inactive: intramolecular interactions between N- and C-terminal domains mediate autoinhibition in the absence of activation signal. The intrinsic pyroptosis-inducing activity is carried by the released N-terminal moiety (Gasdermin-D, N-terminal) following cleavage by caspases CASP1, CASP4, CASP5 or CASP8. Cleavage at Asp-87 by CASP3 or CASP7 inactivates the ability to mediate pyroptosis. Homooligomerization and pore formation is specifically inhibited by VHH(GSDMD-1) and, to a lesser extent, VHH(GSDMD-2) nanobodies, protecting against excessive pyroptosis. Inhibited by small molecule NU6300, which covalently reacts with Cys-191, thereby preventing palmitoylation and pyroptosis. Precursor of a pore-forming protein that plays a key role in host defense against pathogen infection and danger signals. This form constitutes the precursor of the pore-forming protein: upon cleavage, the released N-terminal moiety (Gasdermin-D, N-terminal) binds to membranes and forms pores, triggering pyroptosis. Its function is as follows. Promotes pyroptosis in response to microbial infection and danger signals. Produced by the cleavage of gasdermin-D by inflammatory caspases CASP1, CASP4 or CASP5 in response to canonical, as well as non-canonical (such as cytosolic LPS) inflammasome activators. After cleavage, moves to the plasma membrane where it strongly binds to inner leaflet lipids, including monophosphorylated phosphatidylinositols, such as phosphatidylinositol 4-phosphate, bisphosphorylated phosphatidylinositols, such as phosphatidylinositol (4,5)-bisphosphate, as well as phosphatidylinositol (3,4,5)-bisphosphate, and more weakly to phosphatidic acid and phosphatidylserine. Homooligomerizes within the membrane and forms pores of 10-15 nanometers (nm) of inner diameter, allowing the release of mature interleukin-1 (IL1B and IL18) and triggering pyroptosis. Gasdermin pores also allow the release of mature caspase-7 (CASP7). In some, but not all, cells types, pyroptosis is followed by pyroptotic cell death, which is caused by downstream activation of ninjurin-1 (NINJ1), which mediates membrane rupture (cytolysis). Also forms pores in the mitochondrial membrane, resulting in release of mitochondrial DNA (mtDNA) into the cytosol. Gasdermin-D, N-terminal released from pyroptotic cells into the extracellular milieu rapidly binds to and kills both Gram-negative and Gram-positive bacteria, without harming neighboring mammalian cells, as it does not disrupt the plasma membrane from the outside due to lipid-binding specificity. Under cell culture conditions, also active against intracellular bacteria, such as Listeria monocytogenes. Also active in response to MAP3K7/TAK1 inactivation by Yersinia toxin YopJ, which triggers cleavage by CASP8 and subsequent activation. Required for mucosal tissue defense against enteric pathogens. Activation of the non-canonical inflammasome in brain endothelial cells can lead to excessive pyroptosis, leading to blood-brain barrier breakdown. Strongly binds to bacterial and mitochondrial lipids, including cardiolipin. Does not bind to unphosphorylated phosphatidylinositol, phosphatidylethanolamine nor phosphatidylcholine. In terms of biological role, transcription coactivator produced by the cleavage by CASP3 or CASP7 in the upper small intestine in response to dietary antigens. Required to maintain food tolerance in small intestine: translocates to the nucleus and acts as a coactivator for STAT1 to induce the transcription of CIITA and MHC class II molecules, which in turn induce type 1 regulatory T (Tr1) cells in upper small intestine. Functionally, produced by the cleavage by papain allergen. After cleavage, moves to the plasma membrane and homooligomerizes within the membrane and forms pores of 10-15 nanometers (nm) of inner diameter, allowing the specific release of mature interleukin-33 (IL33), promoting type 2 inflammatory immune response. The polypeptide is Gasdermin-D (Homo sapiens (Human)).